An 865-amino-acid chain; its full sequence is Aconitate hydratase B (865 aa).

Substrate-binding positions include Arg191, 244 to 246, 414 to 416, and Ser498; these read SSR and QDT. [4Fe-4S] cluster is bound by residues Cys710, Cys769, and Cys772. Substrate contacts are provided by Arg791 and Arg796.

The protein belongs to the aconitase/IPM isomerase family. As to quaternary structure, monomer. It depends on [4Fe-4S] cluster as a cofactor.

The catalysed reaction is citrate = D-threo-isocitrate. It catalyses the reaction (2S,3R)-3-hydroxybutane-1,2,3-tricarboxylate = 2-methyl-cis-aconitate + H2O. The protein operates within carbohydrate metabolism; tricarboxylic acid cycle; isocitrate from oxaloacetate: step 2/2. It participates in organic acid metabolism; propanoate degradation. Involved in the catabolism of short chain fatty acids (SCFA) via the tricarboxylic acid (TCA)(acetyl degradation route) and the 2-methylcitrate cycle I (propionate degradation route). Catalyzes the reversible isomerization of citrate to isocitrate via cis-aconitate. Also catalyzes the hydration of 2-methyl-cis-aconitate to yield (2R,3S)-2-methylisocitrate. The apo form of AcnB functions as a RNA-binding regulatory protein which regulates FliC synthesis via interaction with the ftsH transcript to decrease the intracellular levels of FtsH. The lower levels of FtsH protease activity then influence sigma-32, DnaK and ultimately FliC production. This chain is Aconitate hydratase B (acnB), found in Salmonella typhimurium (strain LT2 / SGSC1412 / ATCC 700720).